Reading from the N-terminus, the 467-residue chain is Glutamate--tRNA ligase (467 aa).

The 'HIGH' region signature appears at 10–20 (PSPTGHLHIGG). Zn(2+) is bound by residues cysteine 99, cysteine 101, cysteine 126, and glutamate 128. The 'KMSKS' region signature appears at 236–240 (RLSKR). Lysine 239 lines the ATP pocket.

The protein belongs to the class-I aminoacyl-tRNA synthetase family. Glutamate--tRNA ligase type 1 subfamily. Monomer. Requires Zn(2+) as cofactor.

The protein resides in the cytoplasm. The catalysed reaction is tRNA(Glu) + L-glutamate + ATP = L-glutamyl-tRNA(Glu) + AMP + diphosphate. Functionally, catalyzes the attachment of glutamate to tRNA(Glu) in a two-step reaction: glutamate is first activated by ATP to form Glu-AMP and then transferred to the acceptor end of tRNA(Glu). This chain is Glutamate--tRNA ligase, found in Desulfosudis oleivorans (strain DSM 6200 / JCM 39069 / Hxd3) (Desulfococcus oleovorans).